A 308-amino-acid polypeptide reads, in one-letter code: Aspartate carbamoyltransferase catalytic subunit (308 aa).

2 residues coordinate carbamoyl phosphate: arginine 57 and threonine 58. Lysine 86 provides a ligand contact to L-aspartate. Residues arginine 107, histidine 135, and glutamine 138 each coordinate carbamoyl phosphate. The L-aspartate site is built by arginine 167 and arginine 228. Residues leucine 267 and proline 268 each contribute to the carbamoyl phosphate site.

This sequence belongs to the aspartate/ornithine carbamoyltransferase superfamily. ATCase family. In terms of assembly, heterooligomer of catalytic and regulatory chains.

It carries out the reaction carbamoyl phosphate + L-aspartate = N-carbamoyl-L-aspartate + phosphate + H(+). It participates in pyrimidine metabolism; UMP biosynthesis via de novo pathway; (S)-dihydroorotate from bicarbonate: step 2/3. In terms of biological role, catalyzes the condensation of carbamoyl phosphate and aspartate to form carbamoyl aspartate and inorganic phosphate, the committed step in the de novo pyrimidine nucleotide biosynthesis pathway. This Methanosarcina barkeri (strain Fusaro / DSM 804) protein is Aspartate carbamoyltransferase catalytic subunit.